Here is a 238-residue protein sequence, read N- to C-terminus: Succinate dehydrogenase iron-sulfur subunit (238 aa).

One can recognise a 2Fe-2S ferredoxin-type domain in the interval 1-97 (MKLEFSIYRY…KIVIRPLPGL (97 aa)). The [2Fe-2S] cluster site is built by C55, C60, and C75. The 4Fe-4S ferredoxin-type domain maps to 139–169 (QREKLDGLYECILCACCSTSCPSFWWNPDKF). Positions 149, 152, and 155 each coordinate [4Fe-4S] cluster. Position 159 (C159) interacts with [3Fe-4S] cluster. An a ubiquinone-binding site is contributed by W164. [3Fe-4S] cluster is bound by residues C206 and C212. C216 is a binding site for [4Fe-4S] cluster.

The protein belongs to the succinate dehydrogenase/fumarate reductase iron-sulfur protein family. Part of an enzyme complex containing four subunits: a flavoprotein, an iron-sulfur, cytochrome b-556, and a hydrophobic anchor protein. [2Fe-2S] cluster is required as a cofactor. [3Fe-4S] cluster serves as cofactor. The cofactor is [4Fe-4S] cluster.

The enzyme catalyses a quinone + succinate = fumarate + a quinol. The protein operates within carbohydrate metabolism; tricarboxylic acid cycle; fumarate from succinate (bacterial route): step 1/1. Its function is as follows. Two distinct, membrane-bound, FAD-containing enzymes are responsible for the catalysis of fumarate and succinate interconversion; the fumarate reductase is used in anaerobic growth, and the succinate dehydrogenase is used in aerobic growth. The polypeptide is Succinate dehydrogenase iron-sulfur subunit (sdhB) (Salmonella typhimurium (strain LT2 / SGSC1412 / ATCC 700720)).